The primary structure comprises 280 residues: Large ribosomal subunit protein uL2 (280 aa).

A disordered region spans residues asparagine 226–arginine 280. Composition is skewed to basic residues over residues lysine 254 to alanine 264 and arginine 271 to arginine 280.

This sequence belongs to the universal ribosomal protein uL2 family. As to quaternary structure, part of the 50S ribosomal subunit. Forms a bridge to the 30S subunit in the 70S ribosome.

Functionally, one of the primary rRNA binding proteins. Required for association of the 30S and 50S subunits to form the 70S ribosome, for tRNA binding and peptide bond formation. It has been suggested to have peptidyltransferase activity; this is somewhat controversial. Makes several contacts with the 16S rRNA in the 70S ribosome. The chain is Large ribosomal subunit protein uL2 from Roseobacter denitrificans (strain ATCC 33942 / OCh 114) (Erythrobacter sp. (strain OCh 114)).